A 142-amino-acid chain; its full sequence is Large ribosomal subunit protein uL11 (142 aa).

Belongs to the universal ribosomal protein uL11 family. In terms of assembly, part of the ribosomal stalk of the 50S ribosomal subunit. Interacts with L10 and the large rRNA to form the base of the stalk. L10 forms an elongated spine to which L12 dimers bind in a sequential fashion forming a multimeric L10(L12)X complex. Post-translationally, one or more lysine residues are methylated.

Functionally, forms part of the ribosomal stalk which helps the ribosome interact with GTP-bound translation factors. The polypeptide is Large ribosomal subunit protein uL11 (Dictyoglomus turgidum (strain DSM 6724 / Z-1310)).